We begin with the raw amino-acid sequence, 221 residues long: uncharacterized protein (221 aa).

The segment covering 1-11 (MGEKSRRKGPA) has biased composition (basic residues). 2 disordered regions span residues 1-23 (MGEK…GRTC) and 139-169 (SNFQ…SAPE). 2 stretches are compositionally biased toward basic and acidic residues: residues 13–23 (RHADGKLGRTC) and 155–168 (DKRS…RSAP).

This is an uncharacterized protein from Homo sapiens (Human).